Here is a 207-residue protein sequence, read N- to C-terminus: Dephospho-CoA kinase (207 aa).

The 200-residue stretch at 8–207 (AIALTGSIGS…LPCVDCVQSS (200 aa)) folds into the DPCK domain. An ATP-binding site is contributed by 16–21 (GSGKST).

This sequence belongs to the CoaE family.

It is found in the cytoplasm. It catalyses the reaction 3'-dephospho-CoA + ATP = ADP + CoA + H(+). Its pathway is cofactor biosynthesis; coenzyme A biosynthesis; CoA from (R)-pantothenate: step 5/5. In terms of biological role, catalyzes the phosphorylation of the 3'-hydroxyl group of dephosphocoenzyme A to form coenzyme A. This chain is Dephospho-CoA kinase, found in Helicobacter hepaticus (strain ATCC 51449 / 3B1).